The sequence spans 252 residues: Glucosamine-6-phosphate deaminase (252 aa).

Asp67 (proton acceptor; for enolization step) is an active-site residue. Asn137 functions as the For ring-opening step in the catalytic mechanism. Residue His139 is the Proton acceptor; for ring-opening step of the active site. Glu144 serves as the catalytic For ring-opening step.

Belongs to the glucosamine/galactosamine-6-phosphate isomerase family. NagB subfamily.

It catalyses the reaction alpha-D-glucosamine 6-phosphate + H2O = beta-D-fructose 6-phosphate + NH4(+). It functions in the pathway amino-sugar metabolism; N-acetylneuraminate degradation; D-fructose 6-phosphate from N-acetylneuraminate: step 5/5. Its function is as follows. Catalyzes the reversible isomerization-deamination of glucosamine 6-phosphate (GlcN6P) to form fructose 6-phosphate (Fru6P) and ammonium ion. The chain is Glucosamine-6-phosphate deaminase from Staphylococcus aureus (strain MRSA252).